A 459-amino-acid chain; its full sequence is Bifunctional protein GlmU (459 aa).

The segment at 1–228 (MNFKAIILAA…IEELMGVNSR (228 aa)) is pyrophosphorylase. UDP-N-acetyl-alpha-D-glucosamine contacts are provided by residues 8 to 11 (LAAG), K22, Q72, and 77 to 78 (GT). D101 is a Mg(2+) binding site. Residues G138, E153, N168, and N226 each coordinate UDP-N-acetyl-alpha-D-glucosamine. Position 226 (N226) interacts with Mg(2+). A linker region spans residues 229-249 (VELSKAEEIMRRRINESHMVN). Positions 250–459 (GVTIIDTNST…KKNQKDDQSK (210 aa)) are N-acetyltransferase. Residues R331 and K349 each contribute to the UDP-N-acetyl-alpha-D-glucosamine site. H361 acts as the Proton acceptor in catalysis. 2 residues coordinate UDP-N-acetyl-alpha-D-glucosamine: Y364 and N375. Acetyl-CoA is bound by residues 384–385 (NY), S403, T421, and R438.

The protein in the N-terminal section; belongs to the N-acetylglucosamine-1-phosphate uridyltransferase family. In the C-terminal section; belongs to the transferase hexapeptide repeat family. In terms of assembly, homotrimer. Requires Mg(2+) as cofactor.

The protein resides in the cytoplasm. It catalyses the reaction alpha-D-glucosamine 1-phosphate + acetyl-CoA = N-acetyl-alpha-D-glucosamine 1-phosphate + CoA + H(+). The catalysed reaction is N-acetyl-alpha-D-glucosamine 1-phosphate + UTP + H(+) = UDP-N-acetyl-alpha-D-glucosamine + diphosphate. It functions in the pathway nucleotide-sugar biosynthesis; UDP-N-acetyl-alpha-D-glucosamine biosynthesis; N-acetyl-alpha-D-glucosamine 1-phosphate from alpha-D-glucosamine 6-phosphate (route II): step 2/2. It participates in nucleotide-sugar biosynthesis; UDP-N-acetyl-alpha-D-glucosamine biosynthesis; UDP-N-acetyl-alpha-D-glucosamine from N-acetyl-alpha-D-glucosamine 1-phosphate: step 1/1. Its pathway is bacterial outer membrane biogenesis; LPS lipid A biosynthesis. Functionally, catalyzes the last two sequential reactions in the de novo biosynthetic pathway for UDP-N-acetylglucosamine (UDP-GlcNAc). The C-terminal domain catalyzes the transfer of acetyl group from acetyl coenzyme A to glucosamine-1-phosphate (GlcN-1-P) to produce N-acetylglucosamine-1-phosphate (GlcNAc-1-P), which is converted into UDP-GlcNAc by the transfer of uridine 5-monophosphate (from uridine 5-triphosphate), a reaction catalyzed by the N-terminal domain. This chain is Bifunctional protein GlmU, found in Clostridioides difficile (strain 630) (Peptoclostridium difficile).